The primary structure comprises 2067 residues: Separin (2067 aa).

Disordered stretches follow at residues 51–91 (RTAR…AQDV), 140–167 (KKDASPTKRGTTTKGRVKTSQPDLTDNE), 1316–1363 (DLEE…SVEA), and 1449–1478 (LEPKAASESSSKSATRKTRAPTRGTRTKAQ). A compositionally biased stretch (low complexity) spans 55–86 (GTKATATNATASSRAKTTRTKSTSTSTTRTKT). Composition is skewed to low complexity over residues 1333 to 1354 (TRQPATTATRRTRSATTSARST) and 1449 to 1461 (LEPKAASESSSKS). One can recognise a Peptidase C50 domain in the interval 1880 to 1975 (RRNGTYILNP…SGTLTEAGEY (96 aa)). Residue Cys-1964 is part of the active site.

Its subcellular location is the nucleus. The enzyme catalyses All bonds known to be hydrolyzed by this endopeptidase have arginine in P1 and an acidic residue in P4. P6 is often occupied by an acidic residue or by a hydroxy-amino-acid residue, the phosphorylation of which enhances cleavage.. In terms of biological role, required for nuclear division. Could function in the mitotic spindle. This Emericella nidulans (strain FGSC A4 / ATCC 38163 / CBS 112.46 / NRRL 194 / M139) (Aspergillus nidulans) protein is Separin (bimB).